The primary structure comprises 77 residues: Acyl carrier protein (77 aa).

The Carrier domain maps to 2-77; it reads STVEERVKKI…DAIDYIVAHT (76 aa). At Ser37 the chain carries O-(pantetheine 4'-phosphoryl)serine.

This sequence belongs to the acyl carrier protein (ACP) family. Post-translationally, 4'-phosphopantetheine is transferred from CoA to a specific serine of apo-ACP by AcpS. This modification is essential for activity because fatty acids are bound in thioester linkage to the sulfhydryl of the prosthetic group.

The protein resides in the cytoplasm. The protein operates within lipid metabolism; fatty acid biosynthesis. Functionally, carrier of the growing fatty acid chain in fatty acid biosynthesis. This Marinobacter nauticus (strain ATCC 700491 / DSM 11845 / VT8) (Marinobacter aquaeolei) protein is Acyl carrier protein.